Reading from the N-terminus, the 405-residue chain is Polyadenylate-binding protein RBP45B (405 aa).

Residues 1–19 (MMQQPPPGGILPHHAPPPS) show a composition bias toward pro residues. The tract at residues 1–54 (MMQQPPPGGILPHHAPPPSAQQQYGYQQPYGIAGAAPPPPQMWNPQAAAPPSVQ) is disordered. Positions 20–35 (AQQQYGYQQPYGIAGA) are enriched in low complexity. RRM domains are found at residues 62–143 (RTLW…WASL), 155–234 (YTIF…PAAS), and 261–333 (TTVF…WGRS). Residues 379–405 (GGYQQTPQAGQQPPQQPPQQQQVGFSY) are disordered. Over residues 380–405 (GYQQTPQAGQQPPQQPPQQQQVGFSY) the composition is skewed to low complexity.

This sequence belongs to the polyadenylate-binding RBP45 family. Both isoform 1 and isoform 2 interact with poly(A)+ RNA in nucleus. As to expression, expressed in roots, leaves, stems, flowers, siliques, and seedlings. Present in immature anther tissues (tapetum cells) and mature pollen grains.

The protein localises to the nucleus. Its function is as follows. Heterogeneous nuclear ribonucleoprotein (hnRNP)-protein binding the poly(A) tail of mRNA and probably involved in some steps of pre-mRNA maturation. This Arabidopsis thaliana (Mouse-ear cress) protein is Polyadenylate-binding protein RBP45B (RBP45B).